We begin with the raw amino-acid sequence, 265 residues long: MPAAIRPMKKTVSFSKDVSNNNNNLESDSDTKQSPQSYLTFIPQIKNSLLVVPFHNIFILVGMFYSGLTQDLETVMWKGFLTSIPIQVIYNYIIYINLLPLKKSTRNDHQNNSSGSAINNNNNNNNNNVPLLIGSSIFVSIVLSLPLFVVIILMGAPVYKYSLKTLYLSLHLSQLIFNPLIILSNLNVNKIKRLFKQDHLYRIIFHHGILSSVLLTLGGCWLGVIPIPLDWDRPWQQWPITLLVGGYLGGVVGGVLSLIVNYFSH.

2 helical membrane-spanning segments follow: residues 49–69 (LLVV…SGLT) and 79–99 (GFLT…INLL). 2 N-linked (GlcNAc...) asparagine glycosylation sites follow: N111 and N112. 4 helical membrane passes run 137-157 (IFVS…MGAP), 166-186 (LYLS…LSNL), 209-229 (ILSS…PIPL), and 240-260 (ITLL…SLIV).

This sequence belongs to the PIGF family.

The protein localises to the endoplasmic reticulum membrane. The protein operates within glycolipid biosynthesis; glycosylphosphatidylinositol-anchor biosynthesis. Its function is as follows. Acts in the GPI biosynthetic pathway between GlcNAc-PI synthesis and GPI transfer to protein. This is Glycosylphosphatidylinositol anchor biosynthesis protein 11 (GPI11) from Candida albicans (strain SC5314 / ATCC MYA-2876) (Yeast).